Reading from the N-terminus, the 441-residue chain is MVHIKKGELTQEEKELLEVIGKGTVQEAGTLLSSKNVRVNCLDENGMTPLMHAAYKGKLDMCKLLLRHGADVNCHQHEHGYTALMFAALSGNKDITWVMLEAGAETDVVNSVGRTAAQMAAFVGQHDCVTIINNFFPRERLDYYTKPQGLDKEPKLPPKLAGPLHKIITTTNLHPVKIVMLVNENPLLTEEAALNKCYRVMDLICEKCMKQRDMNEVLAMKMHYISCIFQKCINFLKDGENKLDTLIKSLLKGRASDGFPVYQEKIIRESIRKFPYCEATLLQQLVRSIAPVEIGSDPTAFSVLTQAITGQVGFVDVEFCTTCGEKGASKRCSVCKMVIYCDQTCQKTHWFTHKKICKNLKDIYEKQQLEAAKEKRQEENHGKLDVNSNCVNEEQPEAEVGISQKDSNPEDSGEGKKESLESEAELEGLQDAPAGPQVSEE.

ANK repeat units lie at residues 45 to 74, 79 to 108, and 159 to 188; these read NGMT…DVNC, HGYT…ETDV, and KLAG…NPLL. Residues cysteine 320, cysteine 323, cysteine 332, cysteine 335, cysteine 341, cysteine 345, histidine 353, and cysteine 357 each contribute to the Zn(2+) site. The MYND-type zinc finger occupies 320–357; sequence CTTCGEKGASKRCSVCKMVIYCDQTCQKTHWFTHKKIC. Positions 374–384 are enriched in basic and acidic residues; that stretch reads EKRQEENHGKL. The tract at residues 374–441 is disordered; sequence EKRQEENHGK…APAGPQVSEE (68 aa).

Interacts with the retinal-specific guanylyl cyclase GC1.

The protein resides in the cell projection. Its subcellular location is the cilium. In terms of biological role, may be involved in the trafficking of signaling proteins to the cilia. The protein is Ankyrin repeat and MYND domain-containing protein 2 (ANKMY2) of Homo sapiens (Human).